The sequence spans 418 residues: Gamma-glutamyl phosphate reductase (418 aa).

Belongs to the gamma-glutamyl phosphate reductase family.

It localises to the cytoplasm. The catalysed reaction is L-glutamate 5-semialdehyde + phosphate + NADP(+) = L-glutamyl 5-phosphate + NADPH + H(+). The protein operates within amino-acid biosynthesis; L-proline biosynthesis; L-glutamate 5-semialdehyde from L-glutamate: step 2/2. In terms of biological role, catalyzes the NADPH-dependent reduction of L-glutamate 5-phosphate into L-glutamate 5-semialdehyde and phosphate. The product spontaneously undergoes cyclization to form 1-pyrroline-5-carboxylate. This Geotalea daltonii (strain DSM 22248 / JCM 15807 / FRC-32) (Geobacter daltonii) protein is Gamma-glutamyl phosphate reductase.